Reading from the N-terminus, the 414-residue chain is Glucose-6-phosphate isomerase (414 aa).

Glu-266 functions as the Proton donor in the catalytic mechanism. Catalysis depends on residues His-292 and Lys-405.

The protein belongs to the GPI family.

It is found in the cytoplasm. The catalysed reaction is alpha-D-glucose 6-phosphate = beta-D-fructose 6-phosphate. The protein operates within carbohydrate biosynthesis; gluconeogenesis. It participates in carbohydrate degradation; glycolysis; D-glyceraldehyde 3-phosphate and glycerone phosphate from D-glucose: step 2/4. Its function is as follows. Catalyzes the reversible isomerization of glucose-6-phosphate to fructose-6-phosphate. This Thermus thermophilus (strain ATCC BAA-163 / DSM 7039 / HB27) protein is Glucose-6-phosphate isomerase.